The primary structure comprises 494 residues: Guanosine-5'-triphosphate,3'-diphosphate pyrophosphatase (494 aa).

The protein belongs to the GppA/Ppx family. GppA subfamily.

The enzyme catalyses guanosine 3'-diphosphate 5'-triphosphate + H2O = guanosine 3',5'-bis(diphosphate) + phosphate + H(+). The protein operates within purine metabolism; ppGpp biosynthesis; ppGpp from GTP: step 2/2. Catalyzes the conversion of pppGpp to ppGpp. Guanosine pentaphosphate (pppGpp) is a cytoplasmic signaling molecule which together with ppGpp controls the 'stringent response', an adaptive process that allows bacteria to respond to amino acid starvation, resulting in the coordinated regulation of numerous cellular activities. The polypeptide is Guanosine-5'-triphosphate,3'-diphosphate pyrophosphatase (Cronobacter sakazakii (strain ATCC BAA-894) (Enterobacter sakazakii)).